Consider the following 77-residue polypeptide: UPF0291 protein RBAM_017680 (77 aa).

The tract at residues 55–77 (IDPEGNDVTPEKLKREQQKNNLH) is disordered. The segment covering 63–77 (TPEKLKREQQKNNLH) has biased composition (basic and acidic residues).

The protein belongs to the UPF0291 family.

It is found in the cytoplasm. This is UPF0291 protein RBAM_017680 from Bacillus velezensis (strain DSM 23117 / BGSC 10A6 / LMG 26770 / FZB42) (Bacillus amyloliquefaciens subsp. plantarum).